The chain runs to 302 residues: MGEWTILERLLEAAVQQHSTMIGRILLTVVVIFRILVVAIVGETVYDDEQTMFVCNTLQPGCNQACYDKAFPISHIRYWVFQIIMVCTPSLCFITYSVHQSSKQRERQYSTVFITLDKDKKREDNKIKNTTVNGVLQNSEFFTKEMQSDFLEVKEMQNSAARNSKMSKIRRQEGISRFYIIQVVFRNALEIGFLMGQYFLYGFKVPSMYECNRYPCVKMVECYVSRPTEKTVFLVFMFAVSGLCVILNLAELNHLGWRKIKTAVRGAQERRKSIYEIRNKDSPHRIGVPNFGRTQSSDSAYV.

Over methionine 1 to serine 19 the chain is Cytoplasmic. The helical transmembrane segment at threonine 20–glycine 42 threads the bilayer. Residues glutamate 43–histidine 75 are Extracellular-facing. The chain crosses the membrane as a helical span at residues isoleucine 76–valine 98. Residues histidine 99–arginine 177 are Cytoplasmic-facing. The helical transmembrane segment at phenylalanine 178 to leucine 200 threads the bilayer. Over tyrosine 201 to valine 232 the chain is Extracellular. A helical transmembrane segment spans residues phenylalanine 233–leucine 255. At glycine 256 to valine 302 the chain is on the cytoplasmic side.

It belongs to the connexin family. Delta-type subfamily. A connexon is composed of a hexamer of connexins. As to expression, retinal specific.

It localises to the cell membrane. It is found in the cell junction. Its subcellular location is the gap junction. Its function is as follows. One gap junction consists of a cluster of closely packed pairs of transmembrane channels, the connexons, through which materials of low MW diffuse from one cell to a neighboring cell. The chain is Gap junction delta-2 protein from Leucoraja erinaceus (Little skate).